A 196-amino-acid polypeptide reads, in one-letter code: Imidazoleglycerol-phosphate dehydratase (196 aa).

It belongs to the imidazoleglycerol-phosphate dehydratase family.

Its subcellular location is the cytoplasm. The enzyme catalyses D-erythro-1-(imidazol-4-yl)glycerol 3-phosphate = 3-(imidazol-4-yl)-2-oxopropyl phosphate + H2O. It functions in the pathway amino-acid biosynthesis; L-histidine biosynthesis; L-histidine from 5-phospho-alpha-D-ribose 1-diphosphate: step 6/9. The polypeptide is Imidazoleglycerol-phosphate dehydratase (Moorella thermoacetica (strain ATCC 39073 / JCM 9320)).